A 387-amino-acid polypeptide reads, in one-letter code: Histone deacetylase 2 (387 aa).

Residues 73–382 are histone deacetylase; sequence KVSIIYSSSY…IENLSRQGLI (310 aa). Catalysis depends on His201, which acts as the Proton donor/acceptor. Zn(2+) is bound by residues Asp238, His240, and Asp318.

The protein belongs to the histone deacetylase family. HD type 3 subfamily. Zn(2+) is required as a cofactor.

It localises to the nucleus. It catalyses the reaction N(6)-acetyl-L-lysyl-[histone] + H2O = L-lysyl-[histone] + acetate. In terms of biological role, responsible for the deacetylation of lysine residues on the N-terminal part of the core histones (H2A, H2B, H3 and H4). Histone deacetylation gives a tag for epigenetic repression and plays an important role in transcriptional regulation, cell cycle progression and developmental events. Histone deacetylases act via the formation of large multiprotein complexes. The sequence is that of Histone deacetylase 2 (HDA2) from Arabidopsis thaliana (Mouse-ear cress).